Consider the following 147-residue polypeptide: UPF0179 protein NP_3406A (147 aa).

It belongs to the UPF0179 family.

This Natronomonas pharaonis (strain ATCC 35678 / DSM 2160 / CIP 103997 / JCM 8858 / NBRC 14720 / NCIMB 2260 / Gabara) (Halobacterium pharaonis) protein is UPF0179 protein NP_3406A.